A 599-amino-acid polypeptide reads, in one-letter code: MFNKFDTKPLWEVSKTLSSVAQGLEPADMVIINSRLINVCTREVIENTDVAISCGRIALVGDAKHCIGENTEVIDAKGQYIAPGFLDGHIHVESSMLSVSEYARSVVPHGTVGIYMDPHEICNVLGLNGVRYMIEDGKGTPLKNMVTTPSCVPAVPGFEDTGAAVGPEDVRETMKWDEIVGLGEMMNFPGILYSTDHAHGVVGETLKASKTVTGHYSLPETGKGLNGYIASGVRCCHESTRAEDALAKMRLGMYAMFREGSAWHDLKEVSKAITENKVDSRFAVLISDDTHPHTLLKDGHLDHIIKRAIEEGIEPLTAIQMVTINCAQCFQMDHELGSITPGKCADIVFIEDLKDVKITKVIIDGNLVAKGGLLTTSIAKYDYPEDAMNSMHIKNKITPDSFNIMAPNKEKITARVIEIIPERVGTYERHVELNVKDDKVQCDPSKDVLKAVVFERHHETGTAGYGFVKGFGIKRGAMAATVAHDAHNLLVIGTNDEDMALAANTLIECGGGMVAVQDGKVLGLVPLPIAGLMSNKPLEEMAEMVEKLDSAWKEIGCDIVSPFMTMALIPLACLPELRLTNRGLVDCNKFEFVSLFVEE.

It belongs to the metallo-dependent hydrolases superfamily. Adenine deaminase family. Mn(2+) serves as cofactor.

The catalysed reaction is adenine + H2O + H(+) = hypoxanthine + NH4(+). This is Adenine deaminase from Clostridium botulinum (strain ATCC 19397 / Type A).